We begin with the raw amino-acid sequence, 475 residues long: Glycogen synthase (475 aa).

K15 contacts ADP-alpha-D-glucose.

This sequence belongs to the glycosyltransferase 1 family. Bacterial/plant glycogen synthase subfamily.

It carries out the reaction [(1-&gt;4)-alpha-D-glucosyl](n) + ADP-alpha-D-glucose = [(1-&gt;4)-alpha-D-glucosyl](n+1) + ADP + H(+). It participates in glycan biosynthesis; glycogen biosynthesis. Synthesizes alpha-1,4-glucan chains using ADP-glucose. The polypeptide is Glycogen synthase (Chlamydia caviae (strain ATCC VR-813 / DSM 19441 / 03DC25 / GPIC) (Chlamydophila caviae)).